The chain runs to 341 residues: Coiled-coil domain-containing protein 86 (341 aa).

The segment at 1-341 (MGTPLRRSRR…QPPQRPVAKV (341 aa)) is disordered. The residue at position 18 (S18) is a Phosphoserine. Positions 26 to 49 (EVSRAKRALVDFKSNPEETRELES) are enriched in basic and acidic residues. S59 bears the Phosphoserine mark. Residues 64–73 (PETSPESPCP) are compositionally biased toward low complexity. Position 66 is a phosphothreonine (T66). Phosphoserine occurs at positions 67, 70, 81, 92, 103, 114, and 124. The span at 105 to 114 (AGQTESNPES) shows a compositional bias: polar residues. The span at 130–139 (EVAHAKEEVI) shows a compositional bias: basic and acidic residues. Phosphoserine is present on residues S142, S169, S170, and S200. A compositionally biased stretch (basic residues) spans 219–235 (GKPKSGRVWKDRSKKRF). Positions 254-298 (ERQERKLAKDFARHLEEEKQRRRQEKKERRAENLRRRLENERKAE) are enriched in basic and acidic residues. Positions 261–304 (AKDFARHLEEEKQRRRQEKKERRAENLRRRLENERKAEIVQVIR) form a coiled coil. The segment covering 307-317 (AKLKKAKKKQL) has biased composition (basic residues). R323 carries the citrulline modification.

Citrullinated by PADI4.

It is found in the nucleus. The protein resides in the chromosome. It localises to the nucleolus. Required for proper chromosome segregation during mitosis and error-free mitotic progression. The sequence is that of Coiled-coil domain-containing protein 86 from Rattus norvegicus (Rat).